Consider the following 381-residue polypeptide: MTTSTGKINLLGLTQPEMEQFFDSIGEKRFRAGQVMKWIHHFGVSDFAAMTNVGKVLREKLEAVAEIRPPEVVSEDISADGTRKWVIRVASGSCVETVYIPTDDRGTLCVSSQAGCALDCSFCSTGKQGFNSNLTAAEVIGQVWLANKSFGTVPAKVDRAITNVVMMGMGEPLLNFDNVIAAMKIMMDDLGYGISKRRVTLSTSGVVPMIDELAKHIDVSLALSLHAPNDELRNKLVPINKKYPLKVLLESCMGYMSTLGGKRVLTVEYTLLKDVNDQPEHAAQMIELLRDVPCKINLIPFNPFPHSGYERPSNNAIRRFQDLLHHGGFNVTTRTTRGDDIDAACGQLVGQVNDRTRRSERYIAVRQLSADVELQDSAASH.

E96 functions as the Proton acceptor in the catalytic mechanism. The 241-residue stretch at 102-342 folds into the Radical SAM core domain; sequence TDDRGTLCVS…TRTTRGDDID (241 aa). An intrachain disulfide couples C109 to C345. [4Fe-4S] cluster contacts are provided by C116, C120, and C123. S-adenosyl-L-methionine is bound by residues 170–171, S202, 224–226, and N302; these read GE and SLH. The active-site S-methylcysteine intermediate is the C345.

This sequence belongs to the radical SAM superfamily. RlmN family. [4Fe-4S] cluster serves as cofactor.

The protein localises to the cytoplasm. It catalyses the reaction adenosine(2503) in 23S rRNA + 2 reduced [2Fe-2S]-[ferredoxin] + 2 S-adenosyl-L-methionine = 2-methyladenosine(2503) in 23S rRNA + 5'-deoxyadenosine + L-methionine + 2 oxidized [2Fe-2S]-[ferredoxin] + S-adenosyl-L-homocysteine. The catalysed reaction is adenosine(37) in tRNA + 2 reduced [2Fe-2S]-[ferredoxin] + 2 S-adenosyl-L-methionine = 2-methyladenosine(37) in tRNA + 5'-deoxyadenosine + L-methionine + 2 oxidized [2Fe-2S]-[ferredoxin] + S-adenosyl-L-homocysteine. In terms of biological role, specifically methylates position 2 of adenine 2503 in 23S rRNA and position 2 of adenine 37 in tRNAs. m2A2503 modification seems to play a crucial role in the proofreading step occurring at the peptidyl transferase center and thus would serve to optimize ribosomal fidelity. The polypeptide is Dual-specificity RNA methyltransferase RlmN (Pseudomonas putida (strain GB-1)).